The sequence spans 243 residues: Probable ubiquitin-conjugating enzyme E2 33 (243 aa).

A UBC core domain is found at 5–162 (ACIKRLQKEY…FPEYVEKYSQ (158 aa)). The active-site Glycyl thioester intermediate is the cysteine 87. The tract at residues 168–197 (EEAATQQTTTSENQDFPQKDNAKVESEKSV) is disordered. Residues 184-197 (PQKDNAKVESEKSV) are compositionally biased toward basic and acidic residues. A helical transmembrane segment spans residues 220–240 (LPGWIVLLLVSIVGVVMALPL).

It belongs to the ubiquitin-conjugating enzyme family.

The protein localises to the membrane. It carries out the reaction S-ubiquitinyl-[E1 ubiquitin-activating enzyme]-L-cysteine + [E2 ubiquitin-conjugating enzyme]-L-cysteine = [E1 ubiquitin-activating enzyme]-L-cysteine + S-ubiquitinyl-[E2 ubiquitin-conjugating enzyme]-L-cysteine.. The protein operates within protein modification; protein ubiquitination. Accepts the ubiquitin from the E1 complex and catalyzes its covalent attachment to other proteins. The chain is Probable ubiquitin-conjugating enzyme E2 33 (UBC33) from Arabidopsis thaliana (Mouse-ear cress).